A 420-amino-acid chain; its full sequence is tRNA(Ile)-lysidine synthase (420 aa).

An ATP-binding site is contributed by Ser-28–Ser-33.

It belongs to the tRNA(Ile)-lysidine synthase family.

The protein resides in the cytoplasm. The catalysed reaction is cytidine(34) in tRNA(Ile2) + L-lysine + ATP = lysidine(34) in tRNA(Ile2) + AMP + diphosphate + H(+). In terms of biological role, ligates lysine onto the cytidine present at position 34 of the AUA codon-specific tRNA(Ile) that contains the anticodon CAU, in an ATP-dependent manner. Cytidine is converted to lysidine, thus changing the amino acid specificity of the tRNA from methionine to isoleucine. The chain is tRNA(Ile)-lysidine synthase from Hydrogenovibrio crunogenus (strain DSM 25203 / XCL-2) (Thiomicrospira crunogena).